Consider the following 130-residue polypeptide: MKRRTARERAMQALYQMDITGELEPKVAVENTLDEGEETNEFLESLVVGFVDNKEEIDAAIRQNLKKWKLERISIVDRSILRVAVCEMKYMEEIPHNVTINEAIEIAKTFGDEESRRFINGVLSNIKDTL.

Belongs to the NusB family.

Functionally, involved in transcription antitermination. Required for transcription of ribosomal RNA (rRNA) genes. Binds specifically to the boxA antiterminator sequence of the ribosomal RNA (rrn) operons. The polypeptide is Transcription antitermination protein NusB (Bacillus mycoides (strain KBAB4) (Bacillus weihenstephanensis)).